We begin with the raw amino-acid sequence, 450 residues long: Probable ECA polymerase (450 aa).

A run of 11 helical transmembrane segments spans residues 6-26 (FSGL…LTWF), 37-57 (VFFS…TSVL), 63-83 (VGVA…CFYA), 118-138 (VILM…NGFL), 155-175 (GVAL…VYFL), 181-201 (AWLF…MIVG), 207-227 (IIIA…ISLW), 228-248 (MLAA…LKRY), 341-361 (LVVM…GLII), 378-398 (YKAA…IVLA), and 410-430 (VFFI…YWLF).

Belongs to the WzyE family. As to quaternary structure, probably part of a complex composed of WzxE, WzyE and WzzE.

It is found in the cell inner membrane. The protein operates within bacterial outer membrane biogenesis; enterobacterial common antigen biosynthesis. In terms of biological role, probably involved in the polymerization of enterobacterial common antigen (ECA) trisaccharide repeat units. This is Probable ECA polymerase from Escherichia coli O7:K1 (strain IAI39 / ExPEC).